A 124-amino-acid polypeptide reads, in one-letter code: Ribonuclease pancreatic (124 aa).

Over residues 1 to 13 (KESAAAKFERQHM) the composition is skewed to basic and acidic residues. The segment at 1-25 (KESAAAKFERQHMDPSPSSASSSNY) is disordered. Substrate-binding residues include Lys-7 and Arg-10. His-12 acts as the Proton acceptor in catalysis. Disulfide bonds link Cys-26-Cys-84, Cys-40-Cys-95, Cys-58-Cys-110, and Cys-65-Cys-72. Residue Asn-34 is glycosylated (N-linked (GlcNAc...) asparagine; partial). Substrate contacts are provided by residues 41 to 45 (KPVNT), Lys-66, and Arg-85. The active-site Proton donor is His-119.

This sequence belongs to the pancreatic ribonuclease family. As to quaternary structure, monomer. Interacts with and forms tight 1:1 complexes with RNH1. Dimerization of two such complexes may occur. Interaction with RNH1 inhibits this protein. Pancreas.

It localises to the secreted. It catalyses the reaction an [RNA] containing cytidine + H2O = an [RNA]-3'-cytidine-3'-phosphate + a 5'-hydroxy-ribonucleotide-3'-[RNA].. The enzyme catalyses an [RNA] containing uridine + H2O = an [RNA]-3'-uridine-3'-phosphate + a 5'-hydroxy-ribonucleotide-3'-[RNA].. Functionally, endonuclease that catalyzes the cleavage of RNA on the 3' side of pyrimidine nucleotides. Acts on single-stranded and double-stranded RNA. This Capreolus capreolus (European roe deer) protein is Ribonuclease pancreatic (RNASE1).